A 326-amino-acid chain; its full sequence is DNA polymerase III subunit delta' (326 aa).

As to quaternary structure, DNA polymerase III contains a core (composed of alpha, epsilon and theta chains) that associates with a tau subunit. This core dimerizes to form the POLIII' complex. PolIII' associates with the gamma complex (composed of gamma, delta, delta', psi and chi chains) and with the beta chain to form the complete DNA polymerase III complex.

It carries out the reaction DNA(n) + a 2'-deoxyribonucleoside 5'-triphosphate = DNA(n+1) + diphosphate. In terms of biological role, DNA polymerase III is a complex, multichain enzyme responsible for most of the replicative synthesis in bacteria. This DNA polymerase also exhibits 3' to 5' exonuclease activity. The polypeptide is DNA polymerase III subunit delta' (holB) (Buchnera aphidicola subsp. Acyrthosiphon pisum (strain APS) (Acyrthosiphon pisum symbiotic bacterium)).